The primary structure comprises 361 residues: Cytochrome c peroxidase, mitochondrial (361 aa).

The N-terminal 41 residues, 1–41 (MASAARSASRAFLRSSLRPAVRSSRFALPTQGLRVASRRGY), are a transit peptide targeting the mitochondrion. Residue histidine 122 is the Proton acceptor of the active site. Histidine 245 serves as a coordination point for heme b. The Tryptophan radical intermediate role is filled by tryptophan 261.

It belongs to the peroxidase family. Cytochrome c peroxidase subfamily. As to quaternary structure, forms a one-to-one complex with cytochrome c. Heme b serves as cofactor.

The protein localises to the mitochondrion matrix. Its subcellular location is the mitochondrion intermembrane space. It catalyses the reaction 2 Fe(II)-[cytochrome c] + H2O2 + 2 H(+) = 2 Fe(III)-[cytochrome c] + 2 H2O. Its function is as follows. Destroys radicals which are normally produced within the cells and which are toxic to biological systems. This chain is Cytochrome c peroxidase, mitochondrial (ccp1), found in Emericella nidulans (strain FGSC A4 / ATCC 38163 / CBS 112.46 / NRRL 194 / M139) (Aspergillus nidulans).